The following is a 652-amino-acid chain: Replication protein E1 (652 aa).

Residues 86–88 (KRK) carry the Nuclear localization signal motif. At Ser-92 the chain carries Phosphoserine; by host. The interval 153–173 (NNTNGEEEGENGGENGGSIRE) is disordered. The segment at 188–354 (DPQSPTAQLK…LTVIQHGIDD (167 aa)) is DNA-binding region. The 151-residue stretch at 453–603 (VEFITFLCAF…FPFDQNRNPV (151 aa)) folds into the SF3 helicase domain. Residue 479–486 (GPPNTGKS) coordinates ATP. Lys-560 is covalently cross-linked (Glycyl lysine isopeptide (Lys-Gly) (interchain with G-Cter in SUMO)).

This sequence belongs to the papillomaviridae E1 protein family. Can form hexamers. Interacts with E2 protein; this interaction increases E1 DNA binding specificity. Interacts with host DNA polymerase subunit POLA2. Interacts with host single stranded DNA-binding protein RPA1. Interacts with host TOP1; this interaction stimulates the enzymatic activity of TOP1. In terms of processing, phosphorylated. Post-translationally, sumoylated.

The protein localises to the host nucleus. It catalyses the reaction Couples ATP hydrolysis with the unwinding of duplex DNA by translocating in the 3'-5' direction.. The enzyme catalyses ATP + H2O = ADP + phosphate + H(+). Functionally, ATP-dependent DNA 3'-5' helicase required for initiation of viral DNA replication. It forms a complex with the viral E2 protein. The E1-E2 complex binds to the replication origin which contains binding sites for both proteins. During the initial step, a dimer of E1 interacts with a dimer of protein E2 leading to a complex that binds the viral origin of replication with high specificity. Then, a second dimer of E1 displaces the E2 dimer in an ATP-dependent manner to form the E1 tetramer. Following this, two E1 monomers are added to each half of the site, which results in the formation of two E1 trimers on the viral ori. Subsequently, two hexamers will be created. The double hexamer acts as a bi-directional helicase machinery and unwinds the viral DNA and then recruits the host DNA polymerase to start replication. The sequence is that of Replication protein E1 from Human papillomavirus type 70.